The sequence spans 361 residues: Probable cadicidin biosynthesis thioesterase (361 aa).

A 4Fe-4S ferredoxin-type domain is found at 2–29; that stretch reads RVTVDSEQCVGAGQCVLNAPEVFDQDDD. Residues 36–110 are disordered; sequence RADPTSGTTR…RRDSPVTTAD (75 aa). Basic residues predominate over residues 46–61; that stretch reads RSARRATCARRPRSSS. Basic and acidic residues-rich tracts occupy residues 62-74 and 94-104; these read RRTEPAGCADRHR and TDRRQNHRRDS. Ser-201 is a catalytic residue.

Belongs to the thioesterase family.

Its pathway is antibiotic biosynthesis; candicidin biosynthesis. Probable thioesterase involved in the biosynthesis of candicidin. Could release the macrolide ring from the polyketide synthase. The polypeptide is Probable cadicidin biosynthesis thioesterase (Streptomyces griseus).